The chain runs to 97 residues: uncharacterized protein (97 aa).

Its function is as follows. May have a regulatory function. This is an uncharacterized protein from Synechocystis sp. (strain ATCC 27184 / PCC 6803 / Kazusa).